A 210-amino-acid chain; its full sequence is Na(+)-translocating NADH-quinone reductase subunit D (210 aa).

The next 6 membrane-spanning stretches (helical) occupy residues 9–29, 42–62, 72–92, 103–123, 131–151, and 178–198; these read SVLIGPIVSNNPIALQILGVC, LVMTIALTAVCALSNLFISLI, IIVQMTIIASLVIVVDQVLQA, VFVGLIITNCIVMGRAEAFAM, FMDGLGNGLGYGAILLSVGFV, and NGLLLLPPSAFFLIGALIWII.

It belongs to the NqrDE/RnfAE family. Composed of six subunits; NqrA, NqrB, NqrC, NqrD, NqrE and NqrF.

Its subcellular location is the cell inner membrane. It carries out the reaction a ubiquinone + n Na(+)(in) + NADH + H(+) = a ubiquinol + n Na(+)(out) + NAD(+). Functionally, NQR complex catalyzes the reduction of ubiquinone-1 to ubiquinol by two successive reactions, coupled with the transport of Na(+) ions from the cytoplasm to the periplasm. NqrA to NqrE are probably involved in the second step, the conversion of ubisemiquinone to ubiquinol. This is Na(+)-translocating NADH-quinone reductase subunit D from Shewanella piezotolerans (strain WP3 / JCM 13877).